A 436-amino-acid chain; its full sequence is 3-ketoacyl-CoA thiolase (436 aa).

The active-site Acyl-thioester intermediate is Cys99. Catalysis depends on proton acceptor residues His392 and Cys422.

It belongs to the thiolase-like superfamily. Thiolase family. As to quaternary structure, heterotetramer of two alpha chains (FadJ) and two beta chains (FadI).

The protein localises to the cytoplasm. The catalysed reaction is an acyl-CoA + acetyl-CoA = a 3-oxoacyl-CoA + CoA. It functions in the pathway lipid metabolism; fatty acid beta-oxidation. Its function is as follows. Catalyzes the final step of fatty acid oxidation in which acetyl-CoA is released and the CoA ester of a fatty acid two carbons shorter is formed. This is 3-ketoacyl-CoA thiolase from Shewanella sediminis (strain HAW-EB3).